A 194-amino-acid chain; its full sequence is Transmembrane protein 212 (194 aa).

The next 5 helical transmembrane spans lie at 11–31 (ILVT…FPVF), 44–64 (IACP…LLLA), 76–96 (ATFT…AIAL), 99–119 (ALLG…NYLG), and 148–168 (LQAL…TVFI).

It is found in the membrane. The polypeptide is Transmembrane protein 212 (TMEM212) (Homo sapiens (Human)).